A 196-amino-acid chain; its full sequence is ATP-dependent Clp protease proteolytic subunit (196 aa).

Serine 96 serves as the catalytic Nucleophile. Histidine 121 is a catalytic residue.

The protein belongs to the peptidase S14 family. As to quaternary structure, fourteen ClpP subunits assemble into 2 heptameric rings which stack back to back to give a disk-like structure with a central cavity, resembling the structure of eukaryotic proteasomes.

It is found in the cytoplasm. The catalysed reaction is Hydrolysis of proteins to small peptides in the presence of ATP and magnesium. alpha-casein is the usual test substrate. In the absence of ATP, only oligopeptides shorter than five residues are hydrolyzed (such as succinyl-Leu-Tyr-|-NHMec, and Leu-Tyr-Leu-|-Tyr-Trp, in which cleavage of the -Tyr-|-Leu- and -Tyr-|-Trp bonds also occurs).. In terms of biological role, cleaves peptides in various proteins in a process that requires ATP hydrolysis. Has a chymotrypsin-like activity. Plays a major role in the degradation of misfolded proteins. The chain is ATP-dependent Clp protease proteolytic subunit from Streptococcus salivarius.